The chain runs to 97 residues: MANTKSALKRVQISERNRLRNKAYKSAVRTLIKKCLVAVSAYGANPSPEGLESAQQALSEAYSKIDKAVKRNVLHRNNGARKKAGLAKALQKVSQAS.

Residues 76–85 show a composition bias toward basic residues; sequence RNNGARKKAG. The tract at residues 76-97 is disordered; sequence RNNGARKKAGLAKALQKVSQAS. The segment covering 86–97 has biased composition (low complexity); sequence LAKALQKVSQAS.

The protein belongs to the bacterial ribosomal protein bS20 family.

In terms of biological role, binds directly to 16S ribosomal RNA. The sequence is that of Small ribosomal subunit protein bS20 from Microcystis aeruginosa (strain NIES-843 / IAM M-2473).